We begin with the raw amino-acid sequence, 412 residues long: Adenosine receptor A2a (412 aa).

Residues 1–7 are Extracellular-facing; sequence MPTVGSL. A helical membrane pass occupies residues 8–32; sequence VYIMVELAIALLAILGNMLVCWAVW. The Cytoplasmic segment spans residues 33–42; that stretch reads LNSNLQNVTN. Residues 43–66 form a helical membrane-spanning segment; it reads YFVVSLAAADIAVGVLAIPFAITI. Over 67 to 77 the chain is Extracellular; that stretch reads STGFCAACHGC. Disulfide bonds link cysteine 71-cysteine 159, cysteine 74-cysteine 146, and cysteine 77-cysteine 166. Residues 78–100 form a helical membrane-spanning segment; it reads LFIACFVLVLTQSSIFSLLAIAI. The Cytoplasmic segment spans residues 101-120; it reads DRYIAIRIPLRYNGLVTGTR. Residues 121-143 traverse the membrane as a helical segment; that stretch reads AKGVIAVCWVLSFAIGLTPMLGW. The Extracellular portion of the chain corresponds to 144-173; it reads NNCHHWGEGENQSQGCGEGQVACLFEDVVP. An N-linked (GlcNAc...) asparagine glycan is attached at asparagine 154. Residue glutamate 169 coordinates adenosine. The helical transmembrane segment at 174–198 threads the bilayer; that stretch reads MNYMVYYNFFACVLVPLLLMLGVYL. Residues 199 to 234 are Cytoplasmic-facing; it reads RIFLAARRQLKQMETQPLPGERARSTLQKEVHAAKS. A helical membrane pass occupies residues 235–258; the sequence is LAIIVGLFALCWLPLHIINCFTFF. Residue asparagine 253 coordinates adenosine. An intrachain disulfide couples cysteine 259 to cysteine 262. The Extracellular segment spans residues 259–266; the sequence is CPECPHAP. Residues 267-290 form a helical membrane-spanning segment; that stretch reads LWLMYPAIILSHFNSVVNPFIYAY. The adenosine site is built by serine 277 and histidine 278. Over 291-412 the chain is Cytoplasmic; the sequence is RIREFRHTFH…PLAQDGAGVS (122 aa). The disordered stretch occupies residues 368–412; it reads RASARESPGDTGLPDVELLSHELHGASPESPGLEGPLAQDGAGVS.

Belongs to the G-protein coupled receptor 1 family. As to quaternary structure, interacts (via cytoplasmic C-terminal domain) with USP4; the interaction is direct. May interact with DRD4. Interacts with NECAB2. Interacts (via cytoplasmic C-terminal domain) with GAS2L2; interaction enhances receptor-mediated adenylyl cyclase activity. Ubiquitinated. Deubiquitinated by USP4; leading to stabilization and expression at the cell surface.

The protein localises to the cell membrane. Its function is as follows. Receptor for adenosine. The activity of this receptor is mediated by G proteins which activate adenylyl cyclase. The polypeptide is Adenosine receptor A2a (ADORA2A) (Equus caballus (Horse)).